The sequence spans 494 residues: UDP-N-acetylmuramoyl-L-alanyl-D-glutamate--L-lysine ligase (494 aa).

S30 is a binding site for UDP-N-acetyl-alpha-D-muramoyl-L-alanyl-D-glutamate. ATP is bound at residue 110–116 (GTNGKTS). UDP-N-acetyl-alpha-D-muramoyl-L-alanyl-D-glutamate is bound by residues 152–153 (TT), S179, and R187. K219 is modified (N6-carboxylysine). The L-lysine recognition motif motif lies at 406–409 (DNPA).

Belongs to the MurCDEF family. MurE subfamily. Carboxylation is probably crucial for Mg(2+) binding and, consequently, for the gamma-phosphate positioning of ATP.

The protein resides in the cytoplasm. It carries out the reaction UDP-N-acetyl-alpha-D-muramoyl-L-alanyl-D-glutamate + L-lysine + ATP = UDP-N-acetyl-alpha-D-muramoyl-L-alanyl-gamma-D-glutamyl-L-lysine + ADP + phosphate + H(+). Its pathway is cell wall biogenesis; peptidoglycan biosynthesis. Catalyzes the addition of L-lysine to the nucleotide precursor UDP-N-acetylmuramoyl-L-alanyl-D-glutamate (UMAG) in the biosynthesis of bacterial cell-wall peptidoglycan. In Staphylococcus epidermidis (strain ATCC 35984 / DSM 28319 / BCRC 17069 / CCUG 31568 / BM 3577 / RP62A), this protein is UDP-N-acetylmuramoyl-L-alanyl-D-glutamate--L-lysine ligase.